Here is a 695-residue protein sequence, read N- to C-terminus: DNA ligase (695 aa).

NAD(+)-binding positions include 39-43, 88-89, and Glu-124; these read DAEYD and SL. Lys-126 functions as the N6-AMP-lysine intermediate in the catalytic mechanism. 4 residues coordinate NAD(+): Arg-147, Glu-183, Lys-299, and Lys-323. Zn(2+) contacts are provided by Cys-419, Cys-422, Cys-437, and Cys-443. The 84-residue stretch at 612–695 folds into the BRCT domain; it reads PAQGHLSGKT…ELAGIGPVGP (84 aa).

It belongs to the NAD-dependent DNA ligase family. LigA subfamily. Mg(2+) serves as cofactor. It depends on Mn(2+) as a cofactor.

The enzyme catalyses NAD(+) + (deoxyribonucleotide)n-3'-hydroxyl + 5'-phospho-(deoxyribonucleotide)m = (deoxyribonucleotide)n+m + AMP + beta-nicotinamide D-nucleotide.. In terms of biological role, DNA ligase that catalyzes the formation of phosphodiester linkages between 5'-phosphoryl and 3'-hydroxyl groups in double-stranded DNA using NAD as a coenzyme and as the energy source for the reaction. It is essential for DNA replication and repair of damaged DNA. This is DNA ligase from Gluconacetobacter diazotrophicus (strain ATCC 49037 / DSM 5601 / CCUG 37298 / CIP 103539 / LMG 7603 / PAl5).